The primary structure comprises 207 residues: Small ribosomal subunit protein uS4 (207 aa).

The S4 RNA-binding domain occupies 98-164; that stretch reads RRLDNVVYRM…AKFKNLVEVN (67 aa).

Belongs to the universal ribosomal protein uS4 family. Part of the 30S ribosomal subunit. Contacts protein S5. The interaction surface between S4 and S5 is involved in control of translational fidelity.

Its function is as follows. One of the primary rRNA binding proteins, it binds directly to 16S rRNA where it nucleates assembly of the body of the 30S subunit. In terms of biological role, with S5 and S12 plays an important role in translational accuracy. The polypeptide is Small ribosomal subunit protein uS4 (Clostridioides difficile (strain 630) (Peptoclostridium difficile)).